We begin with the raw amino-acid sequence, 115 residues long: Somatostatin-1 (115 aa).

The signal sequence occupies residues 1–24 (MLSCRFQCALVLLSLAVVFSKVSA). A propeptide spanning residues 25–88 (APSDLRLRQL…QDEVRLELDR (64 aa)) is cleaved from the precursor. The tract at residues 65–95 (NDALDSSDLSRGADQDEVRLELDRSANSSPL) is disordered. Residues 75–88 (RGADQDEVRLELDR) show a composition bias toward basic and acidic residues. A disulfide bond links Cys-104 and Cys-115.

This sequence belongs to the somatostatin family.

The protein localises to the secreted. In terms of biological role, somatostatin inhibits the release of somatotropin. The polypeptide is Somatostatin-1 (sst1) (Protopterus annectens (African lungfish)).